Reading from the N-terminus, the 185-residue chain is MSGGGTETPVACDAAQGGKKRDSLGTPGAAHLIIKDLGEIHSRLLDHRPVTQGEIRYFVKEFEEKRGLRELRVLKNLENTIQETNECLLPKCRETMECGLGETLQRLQAANDSICRLQQREQERKKVINDYLTASEKRRLVQWEEFVSGQPQRRAEVDEEHRRAVERLREQYAAMEKDLAKFSTF.

The tract at residues 1–25 is disordered; sequence MSGGGTETPVACDAAQGGKKRDSLG. Ser2 carries the N-acetylserine modification.

It belongs to the BLOC1S5 family. As to quaternary structure, octamer composed of one copy each BLOC1S1, BLOC1S2, BLOC1S3, BLOC1S4, BLOC1S5, BLOC1S6, DTNBP1/BLOC1S7 and SNAPIN/BLOC1S8. Component of the biogenesis of lysosome-related organelles complex 1 (BLOC-1) composed of BLOC1S1, BLOC1S2, BLOC1S3, BLOC1S4, BLOC1S5, BLOC1S6, DTNBP1/BLOC1S7 and SNAPIN/BLOC1S8. The BLOC-1 complex associates with the AP-3 protein complex and membrane protein cargos. Interacts with BLOC1S4, BLOC1S6, DTNBP1/BLOC1S7 and PI4K2A. In terms of tissue distribution, detected in heart, brain, spleen, lung, kidney and testis.

Component of the BLOC-1 complex, a complex that is required for normal biogenesis of lysosome-related organelles (LRO), such as platelet dense granules and melanosomes. In concert with the AP-3 complex, the BLOC-1 complex is required to target membrane protein cargos into vesicles assembled at cell bodies for delivery into neurites and nerve terminals. The BLOC-1 complex, in association with SNARE proteins, is also proposed to be involved in neurite extension. Plays a role in intracellular vesicle trafficking. This chain is Biogenesis of lysosome-related organelles complex 1 subunit 5 (Bloc1s5), found in Mus musculus (Mouse).